The primary structure comprises 92 residues: UPF0297 protein TTE1249 (92 aa).

This sequence belongs to the UPF0297 family.

This is UPF0297 protein TTE1249 from Caldanaerobacter subterraneus subsp. tengcongensis (strain DSM 15242 / JCM 11007 / NBRC 100824 / MB4) (Thermoanaerobacter tengcongensis).